The primary structure comprises 119 residues: MPHLAAEAHTWPPHISHSTLSIPHPTPEHRHVFHKKDVKNKRNEEKGNNLLYVLFRTTVIKSSFRSLSTAGRELLFVVHQGHIGTGLIVFIICWRLCLRFLCRVSFQVTVYGGRSRMSA.

The interval 1–20 is disordered; sequence MPHLAAEAHTWPPHISHSTL. The chain crosses the membrane as a helical span at residues 74 to 94; that stretch reads LLFVVHQGHIGTGLIVFIICW.

It is found in the membrane. This is an uncharacterized protein from Saccharomyces cerevisiae (strain ATCC 204508 / S288c) (Baker's yeast).